The sequence spans 136 residues: Large ribosomal subunit protein uL16 (136 aa).

Belongs to the universal ribosomal protein uL16 family. In terms of assembly, part of the 50S ribosomal subunit.

In terms of biological role, binds 23S rRNA and is also seen to make contacts with the A and possibly P site tRNAs. The sequence is that of Large ribosomal subunit protein uL16 from Ruthia magnifica subsp. Calyptogena magnifica.